A 475-amino-acid chain; its full sequence is tRNA-2-methylthio-N(6)-dimethylallyladenosine synthase (475 aa).

The MTTase N-terminal domain maps to K3–A120. Positions 12, 49, 83, 157, 161, and 164 each coordinate [4Fe-4S] cluster. In terms of domain architecture, Radical SAM core spans R143–R375. Positions R378–R441 constitute a TRAM domain.

The protein belongs to the methylthiotransferase family. MiaB subfamily. As to quaternary structure, monomer. [4Fe-4S] cluster serves as cofactor.

Its subcellular location is the cytoplasm. The catalysed reaction is N(6)-dimethylallyladenosine(37) in tRNA + (sulfur carrier)-SH + AH2 + 2 S-adenosyl-L-methionine = 2-methylsulfanyl-N(6)-dimethylallyladenosine(37) in tRNA + (sulfur carrier)-H + 5'-deoxyadenosine + L-methionine + A + S-adenosyl-L-homocysteine + 2 H(+). Catalyzes the methylthiolation of N6-(dimethylallyl)adenosine (i(6)A), leading to the formation of 2-methylthio-N6-(dimethylallyl)adenosine (ms(2)i(6)A) at position 37 in tRNAs that read codons beginning with uridine. The sequence is that of tRNA-2-methylthio-N(6)-dimethylallyladenosine synthase from Shewanella halifaxensis (strain HAW-EB4).